A 250-amino-acid polypeptide reads, in one-letter code: Oil body-associated protein 2B (250 aa).

The segment at 1–29 (MSSSDQNPAATPASSGPAEPSPPGRPTAV) is disordered. Positions 8–18 (PAATPASSGPA) are enriched in low complexity.

It belongs to the OBAP family.

This is Oil body-associated protein 2B from Zea mays (Maize).